The sequence spans 447 residues: Dihydrolipoyllysine-residue acetyltransferase component of pyruvate dehydrogenase complex (447 aa).

Residues 2–78 enclose the Lipoyl-binding domain; sequence PINITMPALS…KVNALIAVLA (77 aa). Lys43 is modified (N6-lipoyllysine). The segment at 91-140 is disordered; it reads GNGAAGAVPAPKPKETAETAPAAAPAPAAAPAPQAAAPASPAPADGEGKR. The span at 108–134 shows a compositional bias: low complexity; it reads ETAPAAAPAPAAAPAPQAAAPASPAPA. Positions 142–179 constitute a Peripheral subunit-binding (PSBD) domain; the sequence is FSSPLARRLAKEAGIDLSAIAGSGPHGRVVKKDVETAV. The active site involves His420.

It belongs to the 2-oxoacid dehydrogenase family. In terms of assembly, forms a 24-polypeptide structural core with octahedral symmetry. It depends on (R)-lipoate as a cofactor.

The enzyme catalyses N(6)-[(R)-dihydrolipoyl]-L-lysyl-[protein] + acetyl-CoA = N(6)-[(R)-S(8)-acetyldihydrolipoyl]-L-lysyl-[protein] + CoA. In terms of biological role, the pyruvate dehydrogenase complex catalyzes the overall conversion of pyruvate to acetyl-CoA and CO(2). It contains multiple copies of three enzymatic components: pyruvate dehydrogenase (E1), dihydrolipoamide acetyltransferase (E2) and lipoamide dehydrogenase (E3). The sequence is that of Dihydrolipoyllysine-residue acetyltransferase component of pyruvate dehydrogenase complex (pdhC) from Rhizobium meliloti (strain 1021) (Ensifer meliloti).